Here is a 224-residue protein sequence, read N- to C-terminus: Ribonuclease T (224 aa).

Positions 32–206 (VVVDVETGGF…YDTEKTAELF (175 aa)) constitute an Exonuclease domain. Residues D35, E37, H193, and D198 each coordinate Mg(2+). The active-site Proton donor/acceptor is H193.

It belongs to the RNase T family. Homodimer. Mg(2+) serves as cofactor.

Its function is as follows. Trims short 3' overhangs of a variety of RNA species, leaving a one or two nucleotide 3' overhang. Responsible for the end-turnover of tRNA: specifically removes the terminal AMP residue from uncharged tRNA (tRNA-C-C-A). Also appears to be involved in tRNA biosynthesis. This chain is Ribonuclease T, found in Pseudomonas fluorescens (strain Pf0-1).